A 904-amino-acid chain; its full sequence is Protein translocase subunit SecA (904 aa).

Residues glutamine 87, 105 to 109 (GEGKT), and aspartate 512 contribute to the ATP site. Residues 851–870 (LARQQQLSHQTDNSALMSEE) are disordered. 4 residues coordinate Zn(2+): cysteine 888, cysteine 890, cysteine 899, and histidine 900.

This sequence belongs to the SecA family. Monomer and homodimer. Part of the essential Sec protein translocation apparatus which comprises SecA, SecYEG and auxiliary proteins SecDF-YajC and YidC. Requires Zn(2+) as cofactor.

The protein resides in the cell inner membrane. The protein localises to the cytoplasm. It carries out the reaction ATP + H2O + cellular proteinSide 1 = ADP + phosphate + cellular proteinSide 2.. Functionally, part of the Sec protein translocase complex. Interacts with the SecYEG preprotein conducting channel. Has a central role in coupling the hydrolysis of ATP to the transfer of proteins into and across the cell membrane, serving both as a receptor for the preprotein-SecB complex and as an ATP-driven molecular motor driving the stepwise translocation of polypeptide chains across the membrane. This chain is Protein translocase subunit SecA, found in Yersinia pseudotuberculosis serotype O:1b (strain IP 31758).